Reading from the N-terminus, the 309-residue chain is Foldase protein PrsA 2 (309 aa).

The first 22 residues, 1–22 (MKQMNKLITGVVTLATVVTLSA), serve as a signal peptide directing secretion. Residue C23 is the site of N-palmitoyl cysteine attachment. C23 carries the S-diacylglycerol cysteine lipid modification. One can recognise a PpiC domain in the interval 146-241 (TPTMTAEIMQ…RTYHIIKVTK (96 aa)).

It belongs to the PrsA family.

Its subcellular location is the cell membrane. The catalysed reaction is [protein]-peptidylproline (omega=180) = [protein]-peptidylproline (omega=0). Its function is as follows. Plays a major role in protein secretion by helping the post-translocational extracellular folding of several secreted proteins. The sequence is that of Foldase protein PrsA 2 from Streptococcus pyogenes serotype M6 (strain ATCC BAA-946 / MGAS10394).